The chain runs to 441 residues: NADH-quinone oxidoreductase subunit D 1 (441 aa).

This sequence belongs to the complex I 49 kDa subunit family. In terms of assembly, NDH-1 is composed of 14 different subunits. Subunits NuoB, C, D, E, F, and G constitute the peripheral sector of the complex.

It localises to the cell membrane. The enzyme catalyses a quinone + NADH + 5 H(+)(in) = a quinol + NAD(+) + 4 H(+)(out). NDH-1 shuttles electrons from NADH, via FMN and iron-sulfur (Fe-S) centers, to quinones in the respiratory chain. The immediate electron acceptor for the enzyme in this species is believed to be a menaquinone. Couples the redox reaction to proton translocation (for every two electrons transferred, four hydrogen ions are translocated across the cytoplasmic membrane), and thus conserves the redox energy in a proton gradient. The protein is NADH-quinone oxidoreductase subunit D 1 of Salinispora tropica (strain ATCC BAA-916 / DSM 44818 / JCM 13857 / NBRC 105044 / CNB-440).